A 232-amino-acid polypeptide reads, in one-letter code: Ubiquinone biosynthesis O-methyltransferase (232 aa).

S-adenosyl-L-methionine is bound by residues R36, G55, D76, and L120.

The protein belongs to the methyltransferase superfamily. UbiG/COQ3 family.

It catalyses the reaction a 3-demethylubiquinol + S-adenosyl-L-methionine = a ubiquinol + S-adenosyl-L-homocysteine + H(+). It carries out the reaction a 3-(all-trans-polyprenyl)benzene-1,2-diol + S-adenosyl-L-methionine = a 2-methoxy-6-(all-trans-polyprenyl)phenol + S-adenosyl-L-homocysteine + H(+). Its pathway is cofactor biosynthesis; ubiquinone biosynthesis. Functionally, O-methyltransferase that catalyzes the 2 O-methylation steps in the ubiquinone biosynthetic pathway. This Azotobacter vinelandii (strain DJ / ATCC BAA-1303) protein is Ubiquinone biosynthesis O-methyltransferase.